Reading from the N-terminus, the 207-residue chain is Fibroblast growth factor 18 (207 aa).

The signal sequence occupies residues 1–27; that stretch reads MYSAPSACTCLCLHFLLLCFQVQVLAA. Asparagine 39 is a glycosylation site (N-linked (GlcNAc...) asparagine). A disulfide bond links cysteine 109 and cysteine 127. Asparagine 137 carries N-linked (GlcNAc...) asparagine glycosylation. Residues 157-183 form a disordered region; the sequence is GRPRKGPKTRENQQDVHFMKRYPKGQT. Positions 164–174 are enriched in basic and acidic residues; sequence KTRENQQDVHF.

This sequence belongs to the heparin-binding growth factors family. In terms of assembly, interacts with FGFR3 and FGFR4. As to expression, mainly expressed in the lung. Not detected in brain, heart, liver, kidney and small intestine.

Its subcellular location is the secreted. Functionally, plays an important role in the regulation of cell proliferation, cell differentiation and cell migration. Required for normal ossification and bone development. Stimulates hepatic and intestinal proliferation. In Rattus norvegicus (Rat), this protein is Fibroblast growth factor 18 (Fgf18).